The following is a 215-amino-acid chain: MKKVLASATILSLMLVGCSNGGNDESSHKDDSSKTEQKDKSSSQHDSKKDSKRNDTNNKQDNQENNTNKEQTNNQNPNDGEQRTSERPTTNSNGNSSDNQNKQQQSVQDNQNKYVAPYQSENATRVARCLSPFEGDRSQALQQLPNFETALSIAKNEANMYGSENKSYNDYSIEQTEDGFRYVFSFKDPSKSNTYSIVTLNRQGQPTVVDPNFQP.

The signal sequence occupies residues 1–17 (MKKVLASATILSLMLVG). A disordered region spans residues 17 to 110 (GCSNGGNDES…NKQQQSVQDN (94 aa)). The N-palmitoyl cysteine moiety is linked to residue C18. C18 is lipidated: S-diacylglycerol cysteine. The segment covering 25 to 62 (ESSHKDDSSKTEQKDKSSSQHDSKKDSKRNDTNNKQDN) has biased composition (basic and acidic residues). 2 stretches are compositionally biased toward low complexity: residues 63 to 76 (QENNTNKEQTNNQN) and 91 to 110 (NSNGNSSDNQNKQQQSVQDN).

It is found in the cell membrane. This is an uncharacterized protein from Staphylococcus epidermidis (strain ATCC 35984 / DSM 28319 / BCRC 17069 / CCUG 31568 / BM 3577 / RP62A).